The chain runs to 362 residues: ATP synthase F(1) complex catalytic subunit beta, mitochondrial (362 aa).

The residue at position 14 (lysine 14) is an N6-acetyllysine; alternate. Lysine 14 is subject to N6-succinyllysine; alternate. Residue lysine 51 is modified to N6-acetyllysine. Residues valine 62, valine 63, glycine 64, lysine 65, threonine 66, and valine 67 each coordinate ADP. Valine 62 is an ATP binding site. Positions 62, 63, 64, 65, and 66 each coordinate phosphate. ATP-binding residues include glycine 64, lysine 65, threonine 66, and valine 67. A Mg(2+)-binding site is contributed by threonine 66. Mg(2+) is bound at residue glutamate 91. Lysine 112 and lysine 117 each carry N6-acetyllysine; alternate. N6-succinyllysine; alternate is present on residues lysine 112 and lysine 117. At threonine 165 the chain carries Phosphothreonine. Residue lysine 279 is modified to N6-acetyllysine. Serine 286 bears the Phosphoserine mark. Residues lysine 333 and lysine 338 each carry the N6-acetyllysine modification.

This sequence belongs to the ATPase alpha/beta chains family. Homotrimer. Component of the ATP synthase complex composed at least of ATP5F1A/subunit alpha, ATP5F1B/subunit beta, ATP5MC1/subunit c (homooctomer), MT-ATP6/subunit a, MT-ATP8/subunit 8, ATP5ME/subunit e, ATP5MF/subunit f, ATP5MG/subunit g, ATP5MK/subunit k, ATP5MJ/subunit j, ATP5F1C/subunit gamma, ATP5F1D/subunit delta, ATP5F1E/subunit epsilon, ATP5PF/subunit F6, ATP5PB/subunit b, ATP5PD/subunit d, ATP5PO/subunit OSCP. ATP synthase complex consists of a soluble F(1) head domain (subunits alpha(3) and beta(3)) - the catalytic core - and a membrane F(0) domain - the membrane proton channel (subunits c, a, 8, e, f, g, k and j). These two domains are linked by a central stalk (subunits gamma, delta, and epsilon) rotating inside the F1 region and a stationary peripheral stalk (subunits F6, b, d, and OSCP). Interacts with PPIF. Interacts with BCL2L1 isoform BCL-X(L); the interaction mediates the association of BCL2L1 isoform BCL-X(L) with the mitochondrial membrane F(1)F(0) ATP synthase and enhances neurons metabolic efficiency. Interacts with CLN5 and PPT1. Interacts with S100A1; this interaction increases F1-ATPase activity. Interacts with MTLN. Interacts with TTC5/STRAP; the interaction results in decreased mitochondrial ATP production.

The protein resides in the mitochondrion inner membrane. The enzyme catalyses ATP + H2O + 4 H(+)(in) = ADP + phosphate + 5 H(+)(out). Catalytic subunit beta, of the mitochondrial membrane ATP synthase complex (F(1)F(0) ATP synthase or Complex V) that produces ATP from ADP in the presence of a proton gradient across the membrane which is generated by electron transport complexes of the respiratory chain. ATP synthase complex consist of a soluble F(1) head domain - the catalytic core - and a membrane F(1) domain - the membrane proton channel. These two domains are linked by a central stalk rotating inside the F(1) region and a stationary peripheral stalk. During catalysis, ATP synthesis in the catalytic domain of F(1) is coupled via a rotary mechanism of the central stalk subunits to proton translocation. In vivo, can only synthesize ATP although its ATP hydrolase activity can be activated artificially in vitro. With the subunit alpha (ATP5F1A), forms the catalytic core in the F(1) domain. This chain is ATP synthase F(1) complex catalytic subunit beta, mitochondrial, found in Mesocricetus auratus (Golden hamster).